A 205-amino-acid chain; its full sequence is uncharacterized protein (205 aa).

This is an uncharacterized protein from Methanococcus vannielii (strain ATCC 35089 / DSM 1224 / JCM 13029 / OCM 148 / SB).